The chain runs to 27 residues: uncharacterized protein (27 aa).

A helical transmembrane segment spans residues 3 to 23; sequence IILWAVLIIFLIGLLVVTGVF.

Its subcellular location is the cell inner membrane. This is an uncharacterized protein from Escherichia coli (strain K12).